Here is a 445-residue protein sequence, read N- to C-terminus: tRNA-2-methylthio-N(6)-dimethylallyladenosine synthase (445 aa).

The MTTase N-terminal domain maps to 3–124 (KKLYIKTYGC…LPELISKVVR (122 aa)). [4Fe-4S] cluster is bound by residues cysteine 12, cysteine 48, cysteine 87, cysteine 162, cysteine 166, and cysteine 169. Residues 148-380 (YPQGASSFIS…QQELATQQLA (233 aa)) enclose the Radical SAM core domain. The TRAM domain occupies 383–445 (QSCVGSTMRV…ALNSLTGEIL (63 aa)).

This sequence belongs to the methylthiotransferase family. MiaB subfamily. Monomer. [4Fe-4S] cluster is required as a cofactor.

It is found in the cytoplasm. The catalysed reaction is N(6)-dimethylallyladenosine(37) in tRNA + (sulfur carrier)-SH + AH2 + 2 S-adenosyl-L-methionine = 2-methylsulfanyl-N(6)-dimethylallyladenosine(37) in tRNA + (sulfur carrier)-H + 5'-deoxyadenosine + L-methionine + A + S-adenosyl-L-homocysteine + 2 H(+). Catalyzes the methylthiolation of N6-(dimethylallyl)adenosine (i(6)A), leading to the formation of 2-methylthio-N6-(dimethylallyl)adenosine (ms(2)i(6)A) at position 37 in tRNAs that read codons beginning with uridine. The chain is tRNA-2-methylthio-N(6)-dimethylallyladenosine synthase from Rickettsia prowazekii (strain Madrid E).